The sequence spans 86 residues: UPF0457 protein SERP1772 (86 aa).

This sequence belongs to the UPF0457 family.

This chain is UPF0457 protein SERP1772, found in Staphylococcus epidermidis (strain ATCC 35984 / DSM 28319 / BCRC 17069 / CCUG 31568 / BM 3577 / RP62A).